The chain runs to 253 residues: Large ribosomal subunit protein uL4 (253 aa).

It belongs to the universal ribosomal protein uL4 family. As to quaternary structure, part of the 50S ribosomal subunit.

In terms of biological role, one of the primary rRNA binding proteins, this protein initially binds near the 5'-end of the 23S rRNA. It is important during the early stages of 50S assembly. It makes multiple contacts with different domains of the 23S rRNA in the assembled 50S subunit and ribosome. Its function is as follows. Forms part of the polypeptide exit tunnel. The chain is Large ribosomal subunit protein uL4 from Methanococcoides burtonii (strain DSM 6242 / NBRC 107633 / OCM 468 / ACE-M).